A 486-amino-acid chain; its full sequence is Glutamate--tRNA ligase (486 aa).

A 'HIGH' region motif is present at residues 12–22; the sequence is PSPTGTPHVGL. The short motif at 256-260 is the 'KMSKS' region element; it reads KLSKR. Residue lysine 259 participates in ATP binding.

The protein belongs to the class-I aminoacyl-tRNA synthetase family. Glutamate--tRNA ligase type 1 subfamily. Monomer.

It localises to the cytoplasm. It carries out the reaction tRNA(Glu) + L-glutamate + ATP = L-glutamyl-tRNA(Glu) + AMP + diphosphate. Functionally, catalyzes the attachment of glutamate to tRNA(Glu) in a two-step reaction: glutamate is first activated by ATP to form Glu-AMP and then transferred to the acceptor end of tRNA(Glu). The protein is Glutamate--tRNA ligase of Mycolicibacterium smegmatis (strain ATCC 700084 / mc(2)155) (Mycobacterium smegmatis).